We begin with the raw amino-acid sequence, 240 residues long: Ribonuclease HII (240 aa).

Residues 29–220 (EPIAGVDEAG…VRRAAGLEPL (192 aa)) form the RNase H type-2 domain. A divalent metal cation-binding residues include aspartate 35, glutamate 36, and aspartate 129.

The protein belongs to the RNase HII family. Mn(2+) serves as cofactor. Mg(2+) is required as a cofactor.

Its subcellular location is the cytoplasm. The enzyme catalyses Endonucleolytic cleavage to 5'-phosphomonoester.. Endonuclease that specifically degrades the RNA of RNA-DNA hybrids. The sequence is that of Ribonuclease HII from Nocardioides sp. (strain ATCC BAA-499 / JS614).